Reading from the N-terminus, the 580-residue chain is Tetratricopeptide repeat protein 39C (580 aa).

3 TPR repeats span residues 312–345 (SLFM…AVDQ), 350–383 (HVCL…SRWS), and 482–515 (GLKH…ELCR).

It belongs to the TTC39 family.

The polypeptide is Tetratricopeptide repeat protein 39C (Ttc39c) (Mus musculus (Mouse)).